The following is a 151-amino-acid chain: Transcriptional repressor NrdR (151 aa).

A zinc finger spans residues 3 to 34 (CPHCGNCDDKVMESRTLAQGDCIRRRRECLAC). The ATP-cone domain maps to 49-141 (FMVIKKDGRR…VYKQFSNLDE (93 aa)).

Belongs to the NrdR family. Zn(2+) is required as a cofactor.

Negatively regulates transcription of bacterial ribonucleotide reductase nrd genes and operons by binding to NrdR-boxes. This is Transcriptional repressor NrdR from Treponema denticola (strain ATCC 35405 / DSM 14222 / CIP 103919 / JCM 8153 / KCTC 15104).